Consider the following 508-residue polypeptide: Glycerol kinase (508 aa).

Residue threonine 15 participates in ADP binding. Residues threonine 15, serine 16, and serine 17 each coordinate ATP. Residue threonine 15 coordinates sn-glycerol 3-phosphate. Position 19 (arginine 19) interacts with ADP. 4 residues coordinate sn-glycerol 3-phosphate: arginine 85, glutamate 86, tyrosine 138, and aspartate 251. 5 residues coordinate glycerol: arginine 85, glutamate 86, tyrosine 138, aspartate 251, and glutamine 252. Residues threonine 273, glycine 317, and glycine 419 each contribute to the ADP site. Threonine 273, glycine 317, and glycine 419 together coordinate ATP.

Belongs to the FGGY kinase family.

It catalyses the reaction glycerol + ATP = sn-glycerol 3-phosphate + ADP + H(+). The protein operates within polyol metabolism; glycerol degradation via glycerol kinase pathway; sn-glycerol 3-phosphate from glycerol: step 1/1. With respect to regulation, inhibited by fructose 1,6-bisphosphate (FBP). In terms of biological role, key enzyme in the regulation of glycerol uptake and metabolism. Catalyzes the phosphorylation of glycerol to yield sn-glycerol 3-phosphate. This chain is Glycerol kinase, found in Mycoplasma pneumoniae (strain ATCC 29342 / M129 / Subtype 1) (Mycoplasmoides pneumoniae).